Reading from the N-terminus, the 287-residue chain is MGKIVVSVIGAGGKMGTRTSNNLAKKPEEFDLLLVEASEAGIQSIKDRGFEPTPVEEALEKSDVVVFAVPDTLIGKLSAIYVPQLKPGTGFIILDPAAAVARELTLRDDCTFGVAHPCHPSYFLDQDTYEARQDRFGGCGGKQDIVMSKIQGNDDRFAQCVEVAKQMYAPVEHAYVMSSEQIAFLEPTLVELLGATCLYAMAETVDEAVKRGIPKEAAVSFLTGHIYNLSANFLGYIPGNPPVSDACKVAIGLGNRLVMREDWKKIWDDEVLNKVIATMLHPDKPQI.

Residues Gly-13–Met-15, Glu-36, and Asp-71 each bind NAD(+). His-116 and Glu-186 together coordinate Zn(2+).

This sequence belongs to the ApnO family. Zn(2+) is required as a cofactor.

The enzyme catalyses D-apionate + NAD(+) = 3-oxoisoapionate + NADH + H(+). It functions in the pathway carbohydrate metabolism. Its function is as follows. Involved in catabolism of D-apiose. Catalyzes the conversion of D-apionate to 3-oxo-isoapionate. The sequence is that of D-apionate oxidoisomerase from Blautia hydrogenotrophica (strain DSM 10507 / JCM 14656 / S5a33) (Ruminococcus hydrogenotrophicus).